Reading from the N-terminus, the 62-residue chain is Photosystem II reaction center protein Z (62 aa).

2 helical membrane passes run 8-28 (AVFA…VVFA) and 41-61 (FSGT…NSLI).

The protein belongs to the PsbZ family. As to quaternary structure, PSII is composed of 1 copy each of membrane proteins PsbA, PsbB, PsbC, PsbD, PsbE, PsbF, PsbH, PsbI, PsbJ, PsbK, PsbL, PsbM, PsbT, PsbY, PsbZ, Psb30/Ycf12, at least 3 peripheral proteins of the oxygen-evolving complex and a large number of cofactors. It forms dimeric complexes.

The protein resides in the plastid. The protein localises to the chloroplast thylakoid membrane. Its function is as follows. May control the interaction of photosystem II (PSII) cores with the light-harvesting antenna, regulates electron flow through the 2 photosystem reaction centers. PSII is a light-driven water plastoquinone oxidoreductase, using light energy to abstract electrons from H(2)O, generating a proton gradient subsequently used for ATP formation. The protein is Photosystem II reaction center protein Z of Nicotiana sylvestris (Wood tobacco).